The following is a 575-amino-acid chain: MSKQVIEQEVLGQVLGPLADNERLKRESKNLRGTIEQDLEDRITGGFTADNFQLIRFHGMYQQDDRDIRNERTKQKLEPLHNVMLRARMPGGIITPKQWLAIDKFADESTSYGSIRLTTRQTFQFHGVLKPNIKLMHQTLNSIGIDSIATAGDVNRNVLCTTNPVESELHQEAYEWAKKISEHLLPKTRAYAEIWLDGEKLATTDEEPILGSNYLPRKFKTTVVIPPQNDVDVHANDLNFIAIAKDGKLVGFNVLVGGGLAMTHGDTSTYARKADDFGFVPLEKTLDVAAAVVTTQRDWGNRSNRKNAKTKYTLDRVGIDVFKAEVEKRAGVEFAESRPYEFTGRGDRIGWAEGIDGKHHLALFIENGRLLDFPGKALKTGVAEIAKIHKGDFRMTANQNLIVAGVLKSQKAQIEKLARQYGLMDDAVSEQRKNSMACVAFPTCPLAMAEAERFLPEFVTDVEDILKKHGLPEEDNIILRITGCPNGCGRAMLAELGLVGKAPGRYNMHLGGNKAGTRIPKMYKENITSAQILEEIDSLVGRWATERTDNEGFGDFTIRAGIIEEVIISKRDLHA.

[4Fe-4S] cluster-binding residues include Cys438, Cys444, Cys484, and Cys488. Cys488 serves as a coordination point for siroheme.

The protein belongs to the nitrite and sulfite reductase 4Fe-4S domain family. Alpha(8)-beta(8). The alpha component is a flavoprotein, the beta component is a hemoprotein. It depends on siroheme as a cofactor. [4Fe-4S] cluster is required as a cofactor.

The enzyme catalyses hydrogen sulfide + 3 NADP(+) + 3 H2O = sulfite + 3 NADPH + 4 H(+). It participates in sulfur metabolism; hydrogen sulfide biosynthesis; hydrogen sulfide from sulfite (NADPH route): step 1/1. In terms of biological role, component of the sulfite reductase complex that catalyzes the 6-electron reduction of sulfite to sulfide. This is one of several activities required for the biosynthesis of L-cysteine from sulfate. The sequence is that of Sulfite reductase [NADPH] hemoprotein beta-component from Vibrio atlanticus (strain LGP32) (Vibrio splendidus (strain Mel32)).